A 396-amino-acid chain; its full sequence is Elongation factor Tu (396 aa).

One can recognise a tr-type G domain in the interval 10–206 (KPHCNIGTIG…AVDAYIPQPE (197 aa)). The interval 19 to 26 (GHVDHGKT) is G1. 19 to 26 (GHVDHGKT) is a binding site for GTP. Residue T26 coordinates Mg(2+). The segment at 60-64 (GITIS) is G2. The G3 stretch occupies residues 81-84 (DCPG). GTP-binding positions include 81–85 (DCPGH) and 136–139 (NKVD). Positions 136 to 139 (NKVD) are G4. The segment at 174-176 (SAL) is G5.

Belongs to the TRAFAC class translation factor GTPase superfamily. Classic translation factor GTPase family. EF-Tu/EF-1A subfamily. Monomer.

Its subcellular location is the cytoplasm. The enzyme catalyses GTP + H2O = GDP + phosphate + H(+). Functionally, GTP hydrolase that promotes the GTP-dependent binding of aminoacyl-tRNA to the A-site of ribosomes during protein biosynthesis. In Gluconacetobacter diazotrophicus (strain ATCC 49037 / DSM 5601 / CCUG 37298 / CIP 103539 / LMG 7603 / PAl5), this protein is Elongation factor Tu.